The following is a 100-amino-acid chain: NADH-quinone oxidoreductase subunit K (100 aa).

3 consecutive transmembrane segments (helical) span residues 4 to 24 (LTHG…GLVI), 28 to 48 (LLFM…AFVV), and 60 to 80 (IMYI…LALL).

It belongs to the complex I subunit 4L family. In terms of assembly, NDH-1 is composed of 13 different subunits. Subunits NuoA, H, J, K, L, M, N constitute the membrane sector of the complex.

The protein resides in the cell inner membrane. The enzyme catalyses a quinone + NADH + 5 H(+)(in) = a quinol + NAD(+) + 4 H(+)(out). In terms of biological role, NDH-1 shuttles electrons from NADH, via FMN and iron-sulfur (Fe-S) centers, to quinones in the respiratory chain. The immediate electron acceptor for the enzyme in this species is believed to be ubiquinone. Couples the redox reaction to proton translocation (for every two electrons transferred, four hydrogen ions are translocated across the cytoplasmic membrane), and thus conserves the redox energy in a proton gradient. The chain is NADH-quinone oxidoreductase subunit K from Klebsiella pneumoniae (strain 342).